The primary structure comprises 150 residues: Protein Smg homolog (150 aa).

It belongs to the Smg family.

The sequence is that of Protein Smg homolog from Leptothrix cholodnii (strain ATCC 51168 / LMG 8142 / SP-6) (Leptothrix discophora (strain SP-6)).